Reading from the N-terminus, the 284-residue chain is Acetylglutamate kinase (284 aa).

Substrate is bound by residues 66-67 (GG), Arg-88, and Asn-179.

This sequence belongs to the acetylglutamate kinase family. ArgB subfamily.

It is found in the cytoplasm. The catalysed reaction is N-acetyl-L-glutamate + ATP = N-acetyl-L-glutamyl 5-phosphate + ADP. It participates in amino-acid biosynthesis; L-arginine biosynthesis; N(2)-acetyl-L-ornithine from L-glutamate: step 2/4. In terms of biological role, catalyzes the ATP-dependent phosphorylation of N-acetyl-L-glutamate. The sequence is that of Acetylglutamate kinase from Actinobacillus pleuropneumoniae serotype 5b (strain L20).